An 819-amino-acid polypeptide reads, in one-letter code: DNA topoisomerase 4 subunit A (819 aa).

The 467-residue stretch at 30–496 folds into the Topo IIA-type catalytic domain; that stretch reads LPDIRDGLKP…QIIEIDTASL (467 aa). The active-site O-(5'-phospho-DNA)-tyrosine intermediate is Y118.

The protein belongs to the type II topoisomerase GyrA/ParC subunit family. ParC type 2 subfamily. In terms of assembly, heterotetramer composed of ParC and ParE.

Its subcellular location is the cell membrane. It carries out the reaction ATP-dependent breakage, passage and rejoining of double-stranded DNA.. Its function is as follows. Topoisomerase IV is essential for chromosome segregation. It relaxes supercoiled DNA. Performs the decatenation events required during the replication of a circular DNA molecule. The chain is DNA topoisomerase 4 subunit A from Streptococcus pyogenes serotype M3 (strain SSI-1).